Consider the following 29-residue polypeptide: MDIVSLAWAVLMVVFTFSLSLVVWGRSGL.

The chain crosses the membrane as a helical span at residues 3 to 23 (IVSLAWAVLMVVFTFSLSLVV).

This sequence belongs to the PetN family. The 4 large subunits of the cytochrome b6-f complex are cytochrome b6, subunit IV (17 kDa polypeptide, PetD), cytochrome f and the Rieske protein, while the 4 small subunits are PetG, PetL, PetM and PetN. The complex functions as a dimer.

It localises to the plastid. The protein resides in the chloroplast thylakoid membrane. Component of the cytochrome b6-f complex, which mediates electron transfer between photosystem II (PSII) and photosystem I (PSI), cyclic electron flow around PSI, and state transitions. In Drimys granadensis, this protein is Cytochrome b6-f complex subunit 8.